The primary structure comprises 94 residues: Co-chaperonin GroES (94 aa).

It belongs to the GroES chaperonin family. As to quaternary structure, heptamer of 7 subunits arranged in a ring. Interacts with the chaperonin GroEL.

The protein localises to the cytoplasm. Together with the chaperonin GroEL, plays an essential role in assisting protein folding. The GroEL-GroES system forms a nano-cage that allows encapsulation of the non-native substrate proteins and provides a physical environment optimized to promote and accelerate protein folding. GroES binds to the apical surface of the GroEL ring, thereby capping the opening of the GroEL channel. In Ehrlichia chaffeensis (strain ATCC CRL-10679 / Arkansas), this protein is Co-chaperonin GroES.